Here is a 187-residue protein sequence, read N- to C-terminus: Prepronociceptin (187 aa).

Residues Met1–Ser19 form the signal peptide. The propeptide occupies Ser20 to Leu95. 3 consecutive repeat copies span residues Asp109–Ala114, Asp115–Ala120, and Asp121–Ala126. The 3 X 6 AA tandem repeats of D-A-E-P-G-A stretch occupies residues Asp109 to Ala126. Positions Asp109 to Glu133 are disordered. Residues Pro112–Glu131 are compositionally biased toward acidic residues. Residues Thr180 to Val187 constitute a propeptide that is removed on maturation.

Belongs to the opioid neuropeptide precursor family. Post-translationally, specific enzymatic cleavages at paired basic residues probably yield other active peptides besides nociceptin. In terms of processing, the N-terminal domain contains 6 conserved cysteines thought to be involved in disulfide bonding and/or processing. As to expression, brain and spinal cord. Low levels in kidney and spleen.

Its subcellular location is the secreted. Ligand of the opioid receptor-like receptor OPRL1. It may act as a transmitter in the brain by modulating nociceptive and locomotor behavior. May be involved in neuronal differentiation and development. When administered intracerebroventricularly, nociceptin induces hyperalgesia and decreases locomotor activity. Functionally, blocks nociceptin action in pain transmission by inhibiting nociceptin-induced hyperalgesia and allodynia. In terms of biological role, has potent analgesic activity. This is Prepronociceptin (Pnoc) from Mus musculus (Mouse).